A 251-amino-acid polypeptide reads, in one-letter code: MRNICLLIAFDGTDYSGWQKQHHANTIQGEIEARLKRLSVKEISLHGAGRTDAGVHADGMTAHFHTDTRLTCNDFQRALNRMLPGAIRILQVREMADDFHARFAATGKEYHYRLFTGGVIPPQKRLYMLHQEKPIDQEAMQKCLQIIIGTHDFSSFENTGSRDKTRTGGKGAVRTILEARYEQFEEDSWHFVFIGDGFLRNMVRNIVGSILEVGRGKESVEWFEQALKEKDRNAAGPTAPAHGLKLFQVFY.

The active-site Nucleophile is the D52. A substrate-binding site is contributed by Y110.

The protein belongs to the tRNA pseudouridine synthase TruA family. In terms of assembly, homodimer.

The enzyme catalyses uridine(38/39/40) in tRNA = pseudouridine(38/39/40) in tRNA. Formation of pseudouridine at positions 38, 39 and 40 in the anticodon stem and loop of transfer RNAs. This chain is tRNA pseudouridine synthase A 1, found in Desulfotalea psychrophila (strain LSv54 / DSM 12343).